We begin with the raw amino-acid sequence, 168 residues long: Pathogenesis-related protein 1A (168 aa).

The N-terminal stretch at 1 to 30 is a signal peptide; it reads MGFVLFSQLPSFLLVSTLLLFLVISHSCRA. The SCP domain occupies 38–156; the sequence is LDAHNTARAD…NGGYVVSCNY (119 aa).

Belongs to the CRISP family. Post-translationally, three disulfide bonds are present.

The protein localises to the vacuole. Its function is as follows. Probably involved in the defense reaction of plants against pathogens. The polypeptide is Pathogenesis-related protein 1A (Nicotiana tabacum (Common tobacco)).